A 201-amino-acid polypeptide reads, in one-letter code: Pectinesterase inhibitor 7 (201 aa).

The signal sequence occupies residues 1–24; the sequence is MARNFELSLILFVLYLSTAAIVMA. Intrachain disulfides connect cysteine 42/cysteine 51 and cysteine 108/cysteine 159.

Belongs to the PMEI family. As to quaternary structure, binds reversibly to PME3 to inhibit its activity; the stability of the PME3-PMEI7 complex and the inhibition of the pectin methylesterase (PME) activity is pH-dependent, based on protonation status of amino-acids at the complex interface. Accumulates in etiolated hypocotyls (at protein level).

It is found in the secreted. The protein localises to the extracellular space. Its subcellular location is the apoplast. The protein resides in the cell wall. Its function is as follows. Pectin methylesterase (PME) inhibitor that can target PME3 in a pH-dependent manner, mainly in slightly acidic conditions (pH 6.0 and 5.0) but not at pH 7.0; this processus relies on changes in the protonation of amino acids involved in intermolecular and intramolecular interactions. Regulates homogalacturonan methylesterification during plant development. In Arabidopsis thaliana (Mouse-ear cress), this protein is Pectinesterase inhibitor 7.